We begin with the raw amino-acid sequence, 218 residues long: Glutathione S-transferase (218 aa).

Residues 3–88 (SKPVLGYWDI…YIGRKYKLTG (86 aa)) enclose the GST N-terminal domain. Residues 9–10 (YW), 43–46 (RSAW), K50, 59–60 (NL), and 72–73 (QT) each bind glutathione. The 117-residue stretch at 90–206 (NEPEELRVSL…YIKAQQPKLF (117 aa)) folds into the GST C-terminal domain. Residue Y116 participates in substrate binding.

This sequence belongs to the GST superfamily. Mu family.

It carries out the reaction RX + glutathione = an S-substituted glutathione + a halide anion + H(+). Its function is as follows. Conjugation of reduced glutathione to a wide number of exogenous and endogenous hydrophobic electrophiles. In Tyrophagus putrescentiae (Mold mite), this protein is Glutathione S-transferase.